The chain runs to 270 residues: Ribosomal RNA small subunit methyltransferase A (270 aa).

S-adenosyl-L-methionine-binding residues include histidine 11, leucine 13, glycine 38, glutamate 59, aspartate 84, and asparagine 109.

The protein belongs to the class I-like SAM-binding methyltransferase superfamily. rRNA adenine N(6)-methyltransferase family. RsmA subfamily.

The protein localises to the cytoplasm. It catalyses the reaction adenosine(1518)/adenosine(1519) in 16S rRNA + 4 S-adenosyl-L-methionine = N(6)-dimethyladenosine(1518)/N(6)-dimethyladenosine(1519) in 16S rRNA + 4 S-adenosyl-L-homocysteine + 4 H(+). Its function is as follows. Specifically dimethylates two adjacent adenosines (A1518 and A1519) in the loop of a conserved hairpin near the 3'-end of 16S rRNA in the 30S particle. May play a critical role in biogenesis of 30S subunits. The sequence is that of Ribosomal RNA small subunit methyltransferase A from Crocosphaera subtropica (strain ATCC 51142 / BH68) (Cyanothece sp. (strain ATCC 51142)).